Reading from the N-terminus, the 893-residue chain is Ubiquitin-like protease 2 (893 aa).

Positions Pro538–Lys800 are protease. Catalysis depends on residues His644, Asp678, and Cys743.

The protein belongs to the peptidase C48 family.

Its subcellular location is the nucleus. The protein localises to the cytoplasm. It localises to the cytosol. In terms of biological role, protease that catalyzes two essential functions in the smo-1 pathway: processing of full-length smo-1 to their mature forms and deconjugation of smo-1 from targeted proteins. May deconjugate smo-1 from the cadherin protein hmr-1 and plays a role in its recruitment to and the maintenance of adherens junctions. Required for epidermal morphogenesis during embryonic development. In Caenorhabditis elegans, this protein is Ubiquitin-like protease 2.